The following is a 243-amino-acid chain: Transcription factor A, mitochondrial (243 aa).

A mitochondrion-targeting transit peptide spans 1–42 (MALFRGMWSVLKALGRTGVEMCAGCGGRIPSSISLVCIPKCF). The HMG box 1 DNA-binding region spans 49-117 (PKKPMSSYLR…AYKEAVSKYK (69 aa)). 3 positions are modified to phosphoserine; by PKA: S54, S55, and S60. K66 carries the post-translational modification N6-succinyllysine. At T121 the chain carries Phosphothreonine. Positions 154–218 (PKRPRSAYNI…RYDNEMKSWE (65 aa)) form a DNA-binding region, HMG box 2. Phosphoserine; by PKA is present on S159. The residue at position 192 (S192) is a Phosphoserine.

In terms of assembly, monomer; binds DNA as a monomer. Homodimer. Component of the mitochondrial transcription initiation complex, composed at least of TFB2M, TFAM and POLRMT. In this complex TFAM recruits POLRMT to the promoter whereas TFB2M induces structural changes in POLRMT to enable promoter opening and trapping of the DNA non-template strand. Upon metabolic stress, forms a complex composed of FOXO3, SIRT3, TFAM and POLRMT. Interacts with TFB1M and TFB2M. Interacts with CLPX; this enhances DNA-binding. Phosphorylation by PKA within the HMG box 1 impairs DNA binding and promotes degradation by the AAA+ Lon protease. As to expression, the mitochondrial isoform is widely expressed while the nuclear isoform is testis-specific.

The protein resides in the mitochondrion. The protein localises to the mitochondrion matrix. It localises to the mitochondrion nucleoid. Its subcellular location is the nucleus. Functionally, binds to the mitochondrial light strand promoter and functions in mitochondrial transcription regulation. Component of the mitochondrial transcription initiation complex, composed at least of TFB2M, TFAM and POLRMT that is required for basal transcription of mitochondrial DNA. In this complex, TFAM recruits POLRMT to a specific promoter whereas TFB2M induces structural changes in POLRMT to enable promoter opening and trapping of the DNA non-template strand. Required for accurate and efficient promoter recognition by the mitochondrial RNA polymerase. Promotes transcription initiation from the HSP1 and the light strand promoter by binding immediately upstream of transcriptional start sites. Is able to unwind DNA. Bends the mitochondrial light strand promoter DNA into a U-turn shape via its HMG boxes. Required for maintenance of normal levels of mitochondrial DNA. May play a role in organizing and compacting mitochondrial DNA. Its function is as follows. May also function as a transcriptional activator or may have a structural role in the compaction of nuclear DNA during spermatogenesis. This Mus musculus (Mouse) protein is Transcription factor A, mitochondrial.